The primary structure comprises 223 residues: N-terminal Xaa-Pro-Lys N-methyltransferase 1 (223 aa).

An N-acetylmethionine modification is found at methionine 1. Residue threonine 2 is modified to N-acetylthreonine; in N-terminal Xaa-Pro-Lys N-methyltransferase 1, N-terminally processed. S-adenosyl-L-methionine-binding positions include glycine 69, arginine 74, 91–93 (DVT), 119–120 (LQ), and glutamine 135.

This sequence belongs to the methyltransferase superfamily. NTM1 family.

Its subcellular location is the nucleus. The catalysed reaction is N-terminal L-alanyl-L-prolyl-L-lysyl-[protein] + 3 S-adenosyl-L-methionine = N-terminal N,N,N-trimethyl-L-alanyl-L-prolyl-L-lysyl-[protein] + 3 S-adenosyl-L-homocysteine + 3 H(+). It carries out the reaction N-terminal L-seryl-L-prolyl-L-lysyl-[protein] + 3 S-adenosyl-L-methionine = N-terminal N,N,N-trimethyl-L-seryl-L-prolyl-L-lysyl-[protein] + 3 S-adenosyl-L-homocysteine + 3 H(+). The enzyme catalyses N-terminal L-prolyl-L-prolyl-L-lysyl-[protein] + 2 S-adenosyl-L-methionine = N-terminal N,N-dimethyl-L-prolyl-L-prolyl-L-lysyl-[protein] + 2 S-adenosyl-L-homocysteine + 2 H(+). In terms of biological role, distributive alpha-N-methyltransferase that methylates the N-terminus of target proteins containing the N-terminal motif [Ala/Gly/Pro/Ser]-Pro-Lys when the initiator Met is cleaved. Specifically catalyzes mono-, di- or tri-methylation of the exposed alpha-amino group of the Ala, Gly or Ser residue in the [Ala/Gly/Ser]-Pro-Lys motif and mono- or di-methylation of Pro in the Pro-Pro-Lys motif. Some of the substrates may be primed by NTMT2-mediated monomethylation. Catalyzes the trimethylation of the N-terminal Gly in CENPA (after removal of Met-1). Responsible for the N-terminal methylation of KLHL31, MYL2, MYL3, RB1, RCC1, RPL23A and SET. Required during mitosis for normal bipolar spindle formation and chromosome segregation via its action on RCC1. This is N-terminal Xaa-Pro-Lys N-methyltransferase 1 (Ntmt1) from Mus musculus (Mouse).